Here is a 193-residue protein sequence, read N- to C-terminus: 5'RNA triphosphatase A449R (193 aa).

Requires Mn(2+) as cofactor.

The catalysed reaction is a 5'-end triphospho-ribonucleoside in mRNA + H2O = a 5'-end diphospho-ribonucleoside in mRNA + phosphate + H(+). In terms of biological role, catalyzes the first stes of cap formation: by removing the gamma-phosphate from the 5'-triphosphate end of nascent mRNA to yield a diphosphate end. This Chlorella (PBCV-1) protein is 5'RNA triphosphatase A449R (A449R).